A 249-amino-acid polypeptide reads, in one-letter code: Ditrans,polycis-undecaprenyl-diphosphate synthase ((2E,6E)-farnesyl-diphosphate specific) (249 aa).

The active site involves Asp-26. Asp-26 contributes to the Mg(2+) binding site. Substrate contacts are provided by residues Gly-27–Arg-30, Trp-31, Arg-39, His-43, and Ser-71–Glu-73. Residue Asn-74 is the Proton acceptor of the active site. Substrate-binding positions include Trp-75, Arg-77, Arg-194, and Arg-200–Ser-202. Glu-213 contacts Mg(2+).

It belongs to the UPP synthase family. As to quaternary structure, homodimer. Requires Mg(2+) as cofactor.

It carries out the reaction 8 isopentenyl diphosphate + (2E,6E)-farnesyl diphosphate = di-trans,octa-cis-undecaprenyl diphosphate + 8 diphosphate. In terms of biological role, catalyzes the sequential condensation of isopentenyl diphosphate (IPP) with (2E,6E)-farnesyl diphosphate (E,E-FPP) to yield (2Z,6Z,10Z,14Z,18Z,22Z,26Z,30Z,34E,38E)-undecaprenyl diphosphate (di-trans,octa-cis-UPP). UPP is the precursor of glycosyl carrier lipid in the biosynthesis of bacterial cell wall polysaccharide components such as peptidoglycan and lipopolysaccharide. This is Ditrans,polycis-undecaprenyl-diphosphate synthase ((2E,6E)-farnesyl-diphosphate specific) from Buchnera aphidicola subsp. Schizaphis graminum (strain Sg).